Reading from the N-terminus, the 125-residue chain is Small ribosomal subunit protein uS11 (125 aa).

The protein belongs to the universal ribosomal protein uS11 family. Part of the 30S ribosomal subunit. Interacts with proteins S7 and S18. Binds to IF-3.

Functionally, located on the platform of the 30S subunit, it bridges several disparate RNA helices of the 16S rRNA. Forms part of the Shine-Dalgarno cleft in the 70S ribosome. The chain is Small ribosomal subunit protein uS11 from Coprothermobacter proteolyticus (strain ATCC 35245 / DSM 5265 / OCM 4 / BT).